Here is a 72-residue protein sequence, read N- to C-terminus: Cell division protein ZapB (72 aa).

Residues Leu3–Asn71 adopt a coiled-coil conformation.

This sequence belongs to the ZapB family. In terms of assembly, homodimer. The ends of the coiled-coil dimer bind to each other, forming polymers. Interacts with FtsZ.

It localises to the cytoplasm. Non-essential, abundant cell division factor that is required for proper Z-ring formation. It is recruited early to the divisome by direct interaction with FtsZ, stimulating Z-ring assembly and thereby promoting cell division earlier in the cell cycle. Its recruitment to the Z-ring requires functional FtsA or ZipA. The chain is Cell division protein ZapB from Haemophilus ducreyi (strain 35000HP / ATCC 700724).